The sequence spans 972 residues: Coatomer subunit beta (972 aa).

5 HEAT repeats span residues 79–113 (LLYF…DLQH), 133–170 (ELLE…VSEH), 317–354 (GCLE…SRNI), 397–434 (EIAA…LYPQ), and 481–518 (RQSI…QAGP). The tract at residues 494–522 (LKNQRKSQDEDDEATEESATKQAGPVILP) is disordered.

As to quaternary structure, oligomeric complex that consists of at least the alpha, beta, beta', gamma, delta, epsilon and zeta subunits.

The protein localises to the cytoplasm. It localises to the golgi apparatus membrane. The protein resides in the cytoplasmic vesicle. Its subcellular location is the COPI-coated vesicle membrane. The coatomer is a cytosolic protein complex that binds to dilysine motifs and reversibly associates with Golgi non-clathrin-coated vesicles, which further mediate biosynthetic protein transport from the ER, via the Golgi up to the trans Golgi network. Coatomer complex is required for budding from Golgi membranes, and is essential for the retrograde Golgi-to-ER transport of dilysine-tagged proteins. This is Coatomer subunit beta from Candida glabrata (strain ATCC 2001 / BCRC 20586 / JCM 3761 / NBRC 0622 / NRRL Y-65 / CBS 138) (Yeast).